The primary structure comprises 353 residues: Photosystem II D2 protein (353 aa).

Thr2 bears the N-acetylthreonine mark. Residue Thr2 is modified to Phosphothreonine. Residues 41–61 traverse the membrane as a helical segment; that stretch reads CAYFALGGWFTGTTFVTSWYT. His118 contributes to the chlorophyll a binding site. Residues 125-141 form a helical membrane-spanning segment; sequence GFMLRQFELARSVQLRP. Residues Gln130 and Asn143 each contribute to the pheophytin a site. A helical membrane pass occupies residues 153–166; that stretch reads VFVSVFLIYPLGQS. His198 serves as a coordination point for chlorophyll a. A helical transmembrane segment spans residues 208-228; sequence AALLCAIHGATVENTLFEDGD. 2 residues coordinate a plastoquinone: His215 and Phe262. His215 serves as a coordination point for Fe cation. His269 provides a ligand contact to Fe cation. The chain crosses the membrane as a helical span at residues 279–295; the sequence is GLWMSAIGVVGLALNLR.

This sequence belongs to the reaction center PufL/M/PsbA/D family. As to quaternary structure, PSII is composed of 1 copy each of membrane proteins PsbA, PsbB, PsbC, PsbD, PsbE, PsbF, PsbH, PsbI, PsbJ, PsbK, PsbL, PsbM, PsbT, PsbX, PsbY, PsbZ, Psb30/Ycf12, at least 3 peripheral proteins of the oxygen-evolving complex and a large number of cofactors. It forms dimeric complexes. Requires The D1/D2 heterodimer binds P680, chlorophylls that are the primary electron donor of PSII, and subsequent electron acceptors. It shares a non-heme iron and each subunit binds pheophytin, quinone, additional chlorophylls, carotenoids and lipids. There is also a Cl(-1) ion associated with D1 and D2, which is required for oxygen evolution. The PSII complex binds additional chlorophylls, carotenoids and specific lipids. as cofactor.

The protein resides in the plastid. Its subcellular location is the chloroplast thylakoid membrane. It carries out the reaction 2 a plastoquinone + 4 hnu + 2 H2O = 2 a plastoquinol + O2. Photosystem II (PSII) is a light-driven water:plastoquinone oxidoreductase that uses light energy to abstract electrons from H(2)O, generating O(2) and a proton gradient subsequently used for ATP formation. It consists of a core antenna complex that captures photons, and an electron transfer chain that converts photonic excitation into a charge separation. The D1/D2 (PsbA/PsbD) reaction center heterodimer binds P680, the primary electron donor of PSII as well as several subsequent electron acceptors. D2 is needed for assembly of a stable PSII complex. The polypeptide is Photosystem II D2 protein (Liriodendron tulipifera (Tuliptree)).